The primary structure comprises 240 residues: Serine protease SplB (240 aa).

The N-terminal stretch at methionine 1 to alanine 36 is a signal peptide. Residues histidine 75, aspartate 113, and serine 193 each act as charge relay system in the active site.

It belongs to the peptidase S1B family.

The protein localises to the secreted. In terms of biological role, serine protease that cleaves specifically after the sequence Trp-Glu-Leu-Gln. The sequence is that of Serine protease SplB (splB) from Staphylococcus aureus (strain bovine RF122 / ET3-1).